The following is a 620-amino-acid chain: MSFDIAKYPTLALVDSTQELRLLPKESLPKLCDELRRYLLDSVSRSSGHFASGLGTVELTVALHYVYNTPFDQLIWDVGHQAYPHKILTGRRDKIGTIRQKGGLHPFPWRGESEYDVLSVGHSSTSISAGIGIAVAAEKEGKDRRTVCVIGDGAITAGMAFEAMNHAGDIRPDMLVILNDNEMSISENVGALNNHLAQLLSGKLYSSLREGGKKVFSGVPPIKELLKRTEEHIKGMVVPGTLFEELGFNYIGPVDGHDVMGLISTLKNMRDLKGPQFLHIMTKKGRGYEPAEKDPITFHAVPKFDPSSGCLPKSSGSLPGYSKIFGDWLCETAAKDSKLMAITPAMREGSGMVEFSRKFPDRYFDVAIAEQHAVTFAAGLAIGGYKPVVAIYSTFLQRAYDQVIHDIAIQKLPVMFAIDRAGIVGADGQTHQGAFDLSYLRCIPDMVIMTPSDENECRQMLFTGYHYNDGPTAVRYPRGNAQGVALTPLEKLPIGKGIVKRHGEKLAILNFGTLMPEAAKVAEALNATLVDMRFVKPLDETLILEMAARHEALATLEENAIMGGAGSGVNEVLMAHRKPVPVLNIGLPDFFIPQGTQEEARAELGLDAAGIEAKIKAWLA.

Thiamine diphosphate-binding positions include His-80 and 121-123; that span reads GHS. Asp-152 lines the Mg(2+) pocket. Thiamine diphosphate-binding positions include 153–154, Asn-181, Tyr-288, and Glu-370; that span reads GA. Mg(2+) is bound at residue Asn-181.

Belongs to the transketolase family. DXPS subfamily. In terms of assembly, homodimer. It depends on Mg(2+) as a cofactor. Requires thiamine diphosphate as cofactor.

It carries out the reaction D-glyceraldehyde 3-phosphate + pyruvate + H(+) = 1-deoxy-D-xylulose 5-phosphate + CO2. It functions in the pathway metabolic intermediate biosynthesis; 1-deoxy-D-xylulose 5-phosphate biosynthesis; 1-deoxy-D-xylulose 5-phosphate from D-glyceraldehyde 3-phosphate and pyruvate: step 1/1. In terms of biological role, catalyzes the acyloin condensation reaction between C atoms 2 and 3 of pyruvate and glyceraldehyde 3-phosphate to yield 1-deoxy-D-xylulose-5-phosphate (DXP). The protein is 1-deoxy-D-xylulose-5-phosphate synthase of Salmonella arizonae (strain ATCC BAA-731 / CDC346-86 / RSK2980).